A 508-amino-acid polypeptide reads, in one-letter code: MWELVTLLGLILAYLFWPRQGSSGTKYPKSLPSLPVVGSLPFLPKSGHMHVNFFKLQKKYGPIYSFRLGSTTTVVIGHHQLARELLIKKGKEFSGRPLTTTVALLSDNGKGIAFADSSATWQLHRRLVLSSFSLFRDGEQKLENIICQELSALCDFLATCDGQVKDLSSSIFMTVVNIICMICFSVSYKEGDMELVTIRRFTTGFVNSLSDDNLVDIFPWLKIFPNKTLEMIRKYTEIRGAMLSKILKECKEKFRSDSVSNLIDLLIQAKVNENNNNSSLDQDSNLFSDKHILTTLGDIFGAGVETSSSVVLWVIAFLLHNPQVKKKIQEEIDHNVGFSRTPTFSDRNHLLMLEATIREVLRIRPVAPILIPHKANTDSSIGEFAIDKDTNVLVNLWALHHNEQEWDRPDQFMPERFLDPTGSQIIVPSSSYLPFGAGPRSCVGEALARQEIFLITAWLLQKFDLEVPEGGQLPSLEGIPKIVFLIDPFKVKITVRPAWKEAQAEGSA.

A heme-binding site is contributed by Cys-442.

Belongs to the cytochrome P450 family. Heme is required as a cofactor.

Its subcellular location is the endoplasmic reticulum membrane. The protein resides in the microsome membrane. It carries out the reaction a C21-steroid + reduced [NADPH--hemoprotein reductase] + O2 = a 17alpha-hydroxy-C21-steroid + oxidized [NADPH--hemoprotein reductase] + H2O + H(+). The enzyme catalyses progesterone + reduced [NADPH--hemoprotein reductase] + O2 = 17alpha-hydroxyprogesterone + oxidized [NADPH--hemoprotein reductase] + H2O + H(+). It catalyses the reaction pregnenolone + reduced [NADPH--hemoprotein reductase] + O2 = 17alpha-hydroxypregnenolone + oxidized [NADPH--hemoprotein reductase] + H2O + H(+). The catalysed reaction is 17alpha-hydroxyprogesterone + reduced [NADPH--hemoprotein reductase] + O2 = androst-4-ene-3,17-dione + acetate + oxidized [NADPH--hemoprotein reductase] + H2O + 2 H(+). It carries out the reaction 17alpha-hydroxyprogesterone + reduced [NADPH--hemoprotein reductase] + O2 = 16alpha,17alpha-dihydroxyprogesterone + oxidized [NADPH--hemoprotein reductase] + H2O + H(+). The enzyme catalyses 16alpha,17alpha-dihydroxyprogesterone + reduced [NADPH--hemoprotein reductase] + O2 = 6beta,16alpha,17alpha-trihydroxyprogesterone + oxidized [NADPH--hemoprotein reductase] + H2O + H(+). It catalyses the reaction 17alpha-hydroxypregnenolone + reduced [NADPH--hemoprotein reductase] + O2 = 3beta-hydroxyandrost-5-en-17-one + acetate + oxidized [NADPH--hemoprotein reductase] + H2O + 2 H(+). The catalysed reaction is 16alpha,17alpha-dihydroxypregnenolone + reduced [NADPH--hemoprotein reductase] + O2 = 3beta,16alpha-dihydroxy-androst-5-en-17-one + acetate + oxidized [NADPH--hemoprotein reductase] + H2O + 2 H(+). It carries out the reaction 3beta-hydroxyandrost-5-en-17-one + reduced [NADPH--hemoprotein reductase] + O2 = 3beta,16alpha-dihydroxy-androst-5-en-17-one + oxidized [NADPH--hemoprotein reductase] + H2O + H(+). The enzyme catalyses androst-4-ene-3,17-dione + reduced [NADPH--hemoprotein reductase] + O2 = 16alpha-hydroxyandrost-4-ene-3,17-dione + oxidized [NADPH--hemoprotein reductase] + H2O + H(+). It participates in steroid hormone biosynthesis. It functions in the pathway steroid biosynthesis; glucocorticoid biosynthesis. Regulated predominantly by intracellular cAMP levels. The 17,20-lyase activity is stimulated by cytochrome b5, which acts as an allosteric effector increasing the Vmax of the lyase activity. A cytochrome P450 monooxygenase involved in corticoid and androgen biosynthesis. Catalyzes 17-alpha hydroxylation of C21 steroids, which is common for both pathways. A second oxidative step, required only for androgen synthesis, involves an acyl-carbon cleavage. The 17-alpha hydroxy intermediates, as part of adrenal glucocorticoids biosynthesis pathway, are precursors of cortisol. Hydroxylates steroid hormones, pregnenolone and progesterone to form 17-alpha hydroxy metabolites, followed by the cleavage of the C17-C20 bond to form C19 steroids, dehydroepiandrosterone (DHEA) and androstenedione. Has 16-alpha hydroxylase activity. Catalyzes 16-alpha hydroxylation of 17-alpha hydroxy pregnenolone, followed by the cleavage of the C17-C20 bond to form 16-alpha-hydroxy DHEA. Also 16-alpha hydroxylates androgens, relevant for estriol synthesis. Mechanistically, uses molecular oxygen inserting one oxygen atom into a substrate, and reducing the second into a water molecule, with two electrons provided by NADPH via cytochrome P450 reductase (CPR; NADPH-ferrihemoprotein reductase). The polypeptide is Steroid 17-alpha-hydroxylase/17,20 lyase (CYP17A1) (Cavia porcellus (Guinea pig)).